We begin with the raw amino-acid sequence, 313 residues long: Ethylene-responsive transcription factor ERN2 (313 aa).

Positions 1–10 (MEIQFDEPKK) are enriched in basic and acidic residues. The segment at 1-29 (MEIQFDEPKKSLRPKKVNKFKGRNKKSET) is disordered. Residues 11 to 24 (SLRPKKVNKFKGRN) show a composition bias toward basic residues. The AP2/ERF DNA-binding region spans 32-89 (KFVGVRQRPSGRYVAEIKDTTQNIRMWLGTFETAEEAARAYDEAATLLRGSKTRTNFV). Disordered stretches follow at residues 108-143 (NRKK…TSST) and 157-204 (TSAS…SSST). 2 stretches are compositionally biased toward low complexity: residues 122 to 143 (SSTT…TSST) and 157 to 193 (TSAS…TNVN).

The protein belongs to the AP2/ERF transcription factor family. ERF subfamily. As to expression, expressed in roots, root hairs and leaves. Expressed in root epidermis and root hairs.

Its subcellular location is the nucleus. Its function is as follows. Transcription factor involved in symbiotic nodule signaling in response to rhizobial Nod factors (NFs). Binds to the GCC box (NF-responsive box) of ENOD11 promoter. Acts as a transcriptional activator of NF-responsive box-containing target gene promoters in root hairs. Involved in early stages of root nodule development. Functions redundantly with ERN1. Is essential with ERN1 for the initiation of root hair infection, and nodule organogenesis and development. Required for accurate expression of the NF signaling genes ENOD11 and ENOD12. The sequence is that of Ethylene-responsive transcription factor ERN2 from Medicago truncatula (Barrel medic).